A 633-amino-acid chain; its full sequence is Probable potassium transport system protein Kup 3 (633 aa).

Transmembrane regions (helical) follow at residues 61–81 (LVSL…VLFL), 107–127 (PVLM…DAMI), 143–163 (VAPA…LLLF), 173–193 (VSVF…AAGV), 211–231 (AIGF…AIFL), 255–275 (WFAV…ALVL), 287–307 (LMFP…GTII), 345–365 (IYLP…MLMF), 371–391 (LAPA…ILAF), 402–422 (ALTA…FLGA), and 427–447 (IHHG…MMWT).

Belongs to the HAK/KUP transporter (TC 2.A.72) family.

The protein localises to the cell inner membrane. The catalysed reaction is K(+)(in) + H(+)(in) = K(+)(out) + H(+)(out). Functionally, transport of potassium into the cell. Likely operates as a K(+):H(+) symporter. The protein is Probable potassium transport system protein Kup 3 of Sinorhizobium medicae (strain WSM419) (Ensifer medicae).